The chain runs to 117 residues: Prefoldin subunit beta (117 aa).

It belongs to the prefoldin subunit beta family. Heterohexamer of two alpha and four beta subunits.

It is found in the cytoplasm. Molecular chaperone capable of stabilizing a range of proteins. Seems to fulfill an ATP-independent, HSP70-like function in archaeal de novo protein folding. The polypeptide is Prefoldin subunit beta (Methanosarcina mazei (strain ATCC BAA-159 / DSM 3647 / Goe1 / Go1 / JCM 11833 / OCM 88) (Methanosarcina frisia)).